An 89-amino-acid polypeptide reads, in one-letter code: Small ribosomal subunit protein uS14 (89 aa).

This sequence belongs to the universal ribosomal protein uS14 family. As to quaternary structure, part of the 30S ribosomal subunit. Contacts proteins S3 and S10.

In terms of biological role, binds 16S rRNA, required for the assembly of 30S particles and may also be responsible for determining the conformation of the 16S rRNA at the A site. The sequence is that of Small ribosomal subunit protein uS14 from Acholeplasma laidlawii (strain PG-8A).